A 196-amino-acid polypeptide reads, in one-letter code: Ribonuclease HII (196 aa).

Residues 15–196 (FILAGIDEAG…RLSFTKALYK (182 aa)) form the RNase H type-2 domain. Positions 21, 22, and 112 each coordinate a divalent metal cation.

It belongs to the RNase HII family. The cofactor is Mn(2+). Requires Mg(2+) as cofactor.

It localises to the cytoplasm. It carries out the reaction Endonucleolytic cleavage to 5'-phosphomonoester.. In terms of biological role, endonuclease that specifically degrades the RNA of RNA-DNA hybrids. This Rickettsia bellii (strain OSU 85-389) protein is Ribonuclease HII.